We begin with the raw amino-acid sequence, 317 residues long: Serine/threonine-protein phosphatase PP1 isozyme 1 (317 aa).

Residues Asp75, His77, Asp103, and Asn135 each coordinate Mn(2+). The active-site Proton donor is the His136. Mn(2+) contacts are provided by His184 and His259.

This sequence belongs to the PPP phosphatase family. PP-1 subfamily. It depends on Mn(2+) as a cofactor.

The enzyme catalyses O-phospho-L-seryl-[protein] + H2O = L-seryl-[protein] + phosphate. It catalyses the reaction O-phospho-L-threonyl-[protein] + H2O = L-threonyl-[protein] + phosphate. This chain is Serine/threonine-protein phosphatase PP1 isozyme 1 (NPP1), found in Nicotiana tabacum (Common tobacco).